The sequence spans 878 residues: MKKTTDKIRQDFLKFFKEKGHMIIPSSSLVPYNDSTLLFTNAGMNQFKEIFLGEKKSNYPRVATVQRCLRTGGKHNDLENVGYTSKHHTFFEMLGNFSFGDYFKKQAIEYAWELLTSKKWFNIPQNKLWISVYKDDTETYKIWNDIIKIPSERIIRIGDKNKEKYNSENFWQMGDTGPCGPCTEIFYDYSDTMKIDPIEFLENKNGRFVEIWNIVFIEFNRISKTKIISLKNKSIDTGMGLERISAVLQNVYSNYHIDVFQKLIKNIAQLSSINNLDHISFQVIADHIRSCSYIIADNILPSNEHRGYILRRIIRRALRHGHKIGIKKNFFHKLVSSVIHVMGKTGDILKEKQEKIENVLKIEEMQFSYTLEKGLKILNSEIEKIDNNILSGKTAFYLYDTFGFPIDLTSDVCREKNIKIDYNSYELAKEKQKEQSNINKKFYKNYNNNIILNDTCIFEGYTKTITRSLVKYIFVNNQSVSKIIKDEKGVIFLDKTPFYSESGGQIGDIGQLYHKKSSFLVEKTKKYGKTIGHIGKLISGQITLNDSLFSHIDEDYRYAIQLNHSATHLLHATLRKILGDSIVQKGSLVTNTYLRFDFSYVKSIDTSQIQKIENIINTNIRNNIKIKTEELNLEEAKKKKAMALFDDQYGSIVRVVFINNFSIELCGGTHTQRTGDIGLFKIISQSSVASGIKRIEAVTGQKAIDYLHEKDNYIKDISLLLNCSTVDIKEKTKKLTIKTKNLEKKIIQLQKKENTQYIKKILKNVTEIKGTKLLTNIFYDYEQKSLRMIVDQLKKELKNTIIILINIINNRFTIIVGVTRNLLDYITAIKIMEMIINKTNGKGGGKKEIAEGGGANTKQLPSILNTIKLWINDKLNEK.

Zn(2+) is bound by residues H564, H568, C666, and H670.

The protein belongs to the class-II aminoacyl-tRNA synthetase family. Homotetramer. Zn(2+) serves as cofactor.

The protein localises to the cytoplasm. The catalysed reaction is tRNA(Ala) + L-alanine + ATP = L-alanyl-tRNA(Ala) + AMP + diphosphate. Catalyzes the attachment of alanine to tRNA(Ala) in a two-step reaction: alanine is first activated by ATP to form Ala-AMP and then transferred to the acceptor end of tRNA(Ala). Also edits incorrectly charged Ser-tRNA(Ala) and Gly-tRNA(Ala) via its editing domain. The polypeptide is Alanine--tRNA ligase (Buchnera aphidicola subsp. Acyrthosiphon pisum (strain APS) (Acyrthosiphon pisum symbiotic bacterium)).